The chain runs to 307 residues: Phosphate import ATP-binding protein PstB (307 aa).

Residues 1-30 (MSETTYTTTEDTDDTNSTDSMVGTTTGETD) form a disordered region. An ABC transporter domain is found at 48-302 (LGVDDLDVYY…PQSERVEDYI (255 aa)). 80–87 (GPSGCGKS) serves as a coordination point for ATP.

The protein belongs to the ABC transporter superfamily. Phosphate importer (TC 3.A.1.7) family. As to quaternary structure, the complex is composed of two ATP-binding proteins (PstB), two transmembrane proteins (PstC and PstA) and a solute-binding protein (PstS).

Its subcellular location is the cell membrane. It carries out the reaction phosphate(out) + ATP + H2O = ADP + 2 phosphate(in) + H(+). Part of the ABC transporter complex PstSACB involved in phosphate import. Responsible for energy coupling to the transport system. This is Phosphate import ATP-binding protein PstB from Haloquadratum walsbyi (strain DSM 16790 / HBSQ001).